A 386-amino-acid chain; its full sequence is Glucose-1-phosphate adenylyltransferase (386 aa).

Alpha-D-glucose 1-phosphate contacts are provided by residues Tyr99, Gly164, 179 to 180, and Ser190; that span reads EK.

It belongs to the bacterial/plant glucose-1-phosphate adenylyltransferase family. Homotetramer.

It carries out the reaction alpha-D-glucose 1-phosphate + ATP + H(+) = ADP-alpha-D-glucose + diphosphate. Its pathway is glycan biosynthesis; glycogen biosynthesis. Its function is as follows. Involved in the biosynthesis of ADP-glucose, a building block required for the elongation reactions to produce glycogen. Catalyzes the reaction between ATP and alpha-D-glucose 1-phosphate (G1P) to produce pyrophosphate and ADP-Glc. The chain is Glucose-1-phosphate adenylyltransferase from Clostridioides difficile (strain 630) (Peptoclostridium difficile).